The primary structure comprises 341 residues: Enduracididine beta-hydroxylase (341 aa).

Fe cation contacts are provided by His146 and Glu148. The segment at 203–223 (HRIHGKAPGDESARESALRER) is disordered. Residue His300 participates in Fe cation binding.

The protein belongs to the clavaminate synthase family. Requires Fe(2+) as cofactor.

The enzyme catalyses L-enduracididine + 2-oxoglutarate + O2 = (3S)-3-hydroxy-L-enduracididine + succinate + CO2. The protein operates within antibiotic biosynthesis. In terms of biological role, hydroxylates the beta carbon of free L-enduracididine to produce (3S)-3-hydroxy-L-enduracididine in biosynthesis of the nonproteinogenic amino acid beta-hydroxyenduracididine, a component of antibiotic mannopeptimycin. This Streptomyces hygroscopicus protein is Enduracididine beta-hydroxylase (mppO).